We begin with the raw amino-acid sequence, 216 residues long: Sperm microtubule inner protein 8 (216 aa).

As to quaternary structure, microtubule inner protein component of sperm flagellar doublet microtubules. In terms of tissue distribution, expressed in testis.

The protein localises to the cytoplasm. It is found in the cytoskeleton. Its subcellular location is the flagellum axoneme. Functionally, microtubule inner protein (MIP) part of the dynein-decorated doublet microtubules (DMTs) in flagellum axoneme. May serve to reinforce and thus stabilize the microtubule structure in the sperm flagella. The sequence is that of Sperm microtubule inner protein 8 (Spmip8) from Mus musculus (Mouse).